A 299-amino-acid polypeptide reads, in one-letter code: Probable 3-hydroxyisobutyrate dehydrogenase-like 2, mitochondrial (299 aa).

NAD(+) contacts are provided by residues 14-43 and S108; that span reads TRIG…TVYA. K182 is a catalytic residue. K250 serves as a coordination point for NAD(+).

This sequence belongs to the HIBADH-related family. 3-hydroxyisobutyrate dehydrogenase subfamily.

It is found in the mitochondrion. It catalyses the reaction 3-hydroxy-2-methylpropanoate + NAD(+) = 2-methyl-3-oxopropanoate + NADH + H(+). It participates in amino-acid degradation; L-valine degradation. This Arabidopsis thaliana (Mouse-ear cress) protein is Probable 3-hydroxyisobutyrate dehydrogenase-like 2, mitochondrial.